Consider the following 344-residue polypeptide: Arginine N-succinyltransferase (344 aa).

Leucine 125 contacts succinyl-CoA. The Proton donor role is filled by histidine 229.

It belongs to the arginine N-succinyltransferase family.

It carries out the reaction succinyl-CoA + L-arginine = N(2)-succinyl-L-arginine + CoA + H(+). It functions in the pathway amino-acid degradation; L-arginine degradation via AST pathway; L-glutamate and succinate from L-arginine: step 1/5. Functionally, catalyzes the transfer of succinyl-CoA to arginine to produce N(2)-succinylarginine. The chain is Arginine N-succinyltransferase from Shigella flexneri serotype 5b (strain 8401).